Consider the following 217-residue polypeptide: Vesicle transport through interaction with t-SNAREs homolog 1A (217 aa).

Over 1–192 the chain is Cytoplasmic; it reads MDVFERTEQN…TGIARRLATN (192 aa). A coiled-coil region spans residues 36–97; that stretch reads AVREVENDID…AQLQSSNQTN (62 aa). A disordered region spans residues 90–109; sequence LQSSNQTNSNPWSNAPDDYQ. The region spanning 123–185 is the t-SNARE coiled-coil homology domain; that stretch reads SNMLDSTSDR…KSARKIMTGI (63 aa). A helical; Anchor for type IV membrane protein membrane pass occupies residues 193-213; that stretch reads KVILSIIILLLMGIIALIICL. At 214–217 the chain is on the vesicular side; it reads KWLR.

The protein belongs to the VTI1 family. As to quaternary structure, component of the SNARE complex composed of syn7A, syn8A, vamp7A and vti1A.

The protein resides in the membrane. Its subcellular location is the cytoplasmic vesicle. It localises to the secretory vesicle membrane. It is found in the clathrin-coated vesicle membrane. The protein localises to the endosome membrane. The protein resides in the endoplasmic reticulum membrane. In terms of biological role, V-SNARE that mediates vesicle transport pathways through interactions with t-SNAREs on the target membrane. These interactions are proposed to mediate aspects of the specificity of vesicle trafficking and to promote fusion of the lipid bilayers. This chain is Vesicle transport through interaction with t-SNAREs homolog 1A, found in Dictyostelium discoideum (Social amoeba).